A 152-amino-acid polypeptide reads, in one-letter code: Transcriptional regulator MraZ (152 aa).

2 consecutive SpoVT-AbrB domains span residues 5–52 (ASAI…PIHE) and 81–124 (AHEV…DEQS).

The protein belongs to the MraZ family. Forms oligomers.

It is found in the cytoplasm. Its subcellular location is the nucleoid. The polypeptide is Transcriptional regulator MraZ (Shewanella baltica (strain OS155 / ATCC BAA-1091)).